Here is a 460-residue protein sequence, read N- to C-terminus: Argininosuccinate lyase (460 aa).

The protein belongs to the lyase 1 family. Argininosuccinate lyase subfamily.

It is found in the cytoplasm. It catalyses the reaction 2-(N(omega)-L-arginino)succinate = fumarate + L-arginine. It functions in the pathway amino-acid biosynthesis; L-arginine biosynthesis; L-arginine from L-ornithine and carbamoyl phosphate: step 3/3. The protein is Argininosuccinate lyase of Campylobacter jejuni subsp. doylei (strain ATCC BAA-1458 / RM4099 / 269.97).